Here is an 80-residue protein sequence, read N- to C-terminus: HssA/B-like protein 2 (80 aa).

Residues 1–29 (MSLLSALTSISKPMNTSSKSSVSSKNVSG) form a disordered region. Low complexity predominate over residues 9–29 (SISKPMNTSSKSSVSSKNVSG).

This sequence belongs to the hssA/B family.

The chain is HssA/B-like protein 2 (hssl2) from Dictyostelium discoideum (Social amoeba).